Reading from the N-terminus, the 637-residue chain is Protein kinase domain-containing protein ppk3 (637 aa).

The Protein kinase domain occupies 1–296 (MDFIKSAASF…QLLSSKLEVI (296 aa)). Residues 414–450 (KTLNNELLRSLAVVQNDQHPTLRTNSTICLGKIAEYL) form an HEAT repeat. The span at 576–586 (NDTTEIKEKKN) shows a compositional bias: basic and acidic residues. The disordered stretch occupies residues 576–637 (NDTTEIKEKK…ENNVEESWGL (62 aa)). A compositionally biased stretch (acidic residues) spans 608–631 (ETEEQIDESWMENWNDEEETENNV).

It localises to the golgi apparatus. The polypeptide is Protein kinase domain-containing protein ppk3 (ppk3) (Schizosaccharomyces pombe (strain 972 / ATCC 24843) (Fission yeast)).